A 289-amino-acid polypeptide reads, in one-letter code: tRNA pseudouridine synthase B (289 aa).

The active-site Nucleophile is the Asp38.

It belongs to the pseudouridine synthase TruB family. Type 1 subfamily.

It carries out the reaction uridine(55) in tRNA = pseudouridine(55) in tRNA. Functionally, responsible for synthesis of pseudouridine from uracil-55 in the psi GC loop of transfer RNAs. This chain is tRNA pseudouridine synthase B, found in Clostridium tetani (strain Massachusetts / E88).